Consider the following 131-residue polypeptide: Holo-[acyl-carrier-protein] synthase (131 aa).

Mg(2+) contacts are provided by Asp8 and Glu59.

The protein belongs to the P-Pant transferase superfamily. AcpS family. Mg(2+) serves as cofactor.

Its subcellular location is the cytoplasm. It catalyses the reaction apo-[ACP] + CoA = holo-[ACP] + adenosine 3',5'-bisphosphate + H(+). Transfers the 4'-phosphopantetheine moiety from coenzyme A to a Ser of acyl-carrier-protein. In Paramagnetospirillum magneticum (strain ATCC 700264 / AMB-1) (Magnetospirillum magneticum), this protein is Holo-[acyl-carrier-protein] synthase.